The sequence spans 205 residues: Inactive ribonuclease-like protein 9 (205 aa).

A signal peptide spans 1–24 (MMLITTHSLPLLLLLLQLWQPLQF). Intrachain disulfides connect cysteine 97–cysteine 152, cysteine 115–cysteine 167, and cysteine 122–cysteine 129. Residues asparagine 130 and asparagine 142 are each glycosylated (N-linked (GlcNAc...) asparagine).

The protein belongs to the pancreatic ribonuclease family.

Its subcellular location is the secreted. Does not exhibit any ribonuclease activity. The polypeptide is Inactive ribonuclease-like protein 9 (RNASE9) (Cebus albifrons (White-fronted capuchin)).